The sequence spans 479 residues: Glycogen synthase (479 aa).

K15 lines the ADP-alpha-D-glucose pocket.

Belongs to the glycosyltransferase 1 family. Bacterial/plant glycogen synthase subfamily.

It catalyses the reaction [(1-&gt;4)-alpha-D-glucosyl](n) + ADP-alpha-D-glucose = [(1-&gt;4)-alpha-D-glucosyl](n+1) + ADP + H(+). It functions in the pathway glycan biosynthesis; glycogen biosynthesis. Functionally, synthesizes alpha-1,4-glucan chains using ADP-glucose. The sequence is that of Glycogen synthase from Clostridium novyi (strain NT).